The sequence spans 155 residues: Ribonuclease HI (155 aa).

In terms of domain architecture, RNase H type-1 spans 1–142 (MTKQVEIFTD…CDELARAAAE (142 aa)). Mg(2+) is bound by residues aspartate 10, glutamate 48, aspartate 70, and aspartate 134.

This sequence belongs to the RNase H family. As to quaternary structure, monomer. It depends on Mg(2+) as a cofactor.

It localises to the cytoplasm. The enzyme catalyses Endonucleolytic cleavage to 5'-phosphomonoester.. In terms of biological role, endonuclease that specifically degrades the RNA of RNA-DNA hybrids. The polypeptide is Ribonuclease HI (Vibrio vulnificus (strain CMCP6)).